The chain runs to 647 residues: Centrosomal protein of 72 kDa (647 aa).

LRR repeat units lie at residues 29–50, 55–76, and 77–98; these read ELQS…GHSL, GLKS…QYLT, and ALES…FRLH. The LRRCT domain occupies 111 to 150; it reads NPVVKVEPDYRLFVVHLLPKLQQLDDRPVRASERKASRLH. Basic and acidic residues-rich tracts occupy residues 152 to 161 and 220 to 234; these read ASEDSLDSKE and KGRE…ESRH. Disordered stretches follow at residues 152–176, 211–256, and 285–413; these read ASED…HHPR, PPGS…RETR, and PEAS…ALPG. S237 bears the Phosphoserine mark. Basic and acidic residues predominate over residues 366–377; it reads SLSRQDSSESRN. At S382 the chain carries Phosphoserine. Residues 390-402 are compositionally biased toward basic and acidic residues; it reads EEQRSRGVTDTRE. S404 carries the phosphoserine modification. Residues 476–620 are a coiled coil; the sequence is SLALESKSLQ…AQHRAEVEQM (145 aa).

It belongs to the CEP72 family. In terms of assembly, interacts with KIZ, PCM1 and CDK5RAP2.

Its subcellular location is the cytoplasm. The protein localises to the cytoskeleton. It is found in the microtubule organizing center. The protein resides in the centrosome. It localises to the centriolar satellite. Its function is as follows. Involved in the recruitment of key centrosomal proteins to the centrosome. Provides centrosomal microtubule-nucleation activity on the gamma-tubulin ring complexes (gamma-TuRCs) and has critical roles in forming a focused bipolar spindle, which is needed for proper tension generation between sister chromatids. Required for localization of KIZ, AKAP9 and gamma-tubulin ring complexes (gamma-TuRCs). Involved in centriole duplication. Required for CDK5RAP22, CEP152, WDR62 and CEP63 centrosomal localization and promotes the centrosomal localization of CDK2. The sequence is that of Centrosomal protein of 72 kDa (CEP72) from Homo sapiens (Human).